Reading from the N-terminus, the 680-residue chain is MIDRYKHQQLRIGLVSPQQISAWATKIIPNGEIVGEVTKPYTFHYKTNKPEKDGLFCERIFGPIKSGICACGNYRVIGDEKEDPKFCEQCGVEFVDSRIRRYQMGYIKLTCPVTHVWYLKRLPSYIANLLDKPLKELEGLVYCDFSFARPITKKPTFLRLRGSFEYEIQSWKYSIPLFFTTQGFDIFRNREISTGAGAIREQLADLDLRIIIENSLVEWKQLGEEGPTGNEWEDRKIVRRKDFLVRRMELAKHFIRTNIEPEWMVLCLLPVLPPELRPIIQIEGGKLMSSDINELYRRVIYRNNTLTDLLTTSRSTPGELVMCQEKLVQEAVDTLLDNGIRGQPMRDGHNKVYKSFSDVIEGKEGRFRETLLGKRVDYSGRSVIVVGPSLSLHRCGLPREIAIELFQTFVIRGLIRQHLASNIGVAKSQIREKKPIVWEILQEVMQGHPVLLNRAPTLHRLGIQSFQPILVEGRTICLHPLVCKGFNADFDGDQMAVHVPLSLEAQAEARLLMFSHMNLLSPAIGDPISVPTQDMLIGLYVLTSGTRRGISANRYNPCNRKNYQNERIYETHYKYTKEPFFCNSYDAIGAYRQKRINLDSPLWLRWQLDQRVIASREVPIEVHYESFGNYHEIYAHYLIVRSVKKETFCIYIRTTVGHISFYREIEEAIQGFSQACSYDT.

The Zn(2+) site is built by cysteine 69, cysteine 71, cysteine 87, and cysteine 90. Mg(2+) is bound by residues aspartate 489, aspartate 491, and aspartate 493.

The protein belongs to the RNA polymerase beta' chain family. RpoC1 subfamily. As to quaternary structure, in plastids the minimal PEP RNA polymerase catalytic core is composed of four subunits: alpha, beta, beta', and beta''. When a (nuclear-encoded) sigma factor is associated with the core the holoenzyme is formed, which can initiate transcription. Mg(2+) is required as a cofactor. Zn(2+) serves as cofactor.

The protein resides in the plastid. It localises to the chloroplast. The catalysed reaction is RNA(n) + a ribonucleoside 5'-triphosphate = RNA(n+1) + diphosphate. DNA-dependent RNA polymerase catalyzes the transcription of DNA into RNA using the four ribonucleoside triphosphates as substrates. In Lepidium virginicum (Virginia pepperweed), this protein is DNA-directed RNA polymerase subunit beta'.